The following is a 103-amino-acid chain: Acylphosphatase-2 (103 aa).

At serine 2 the chain carries N-acetylserine. Residues 13 to 103 (SVDYEVFGRV…LDFSGFSTRY (91 aa)) form the Acylphosphatase-like domain. Active-site residues include arginine 28 and asparagine 46.

It belongs to the acylphosphatase family.

The enzyme catalyses an acyl phosphate + H2O = a carboxylate + phosphate + H(+). Its physiological role is not yet clear. The chain is Acylphosphatase-2 (ACYP2) from Anas platyrhynchos (Mallard).